The primary structure comprises 203 residues: dITP/XTP pyrophosphatase (203 aa).

A substrate-binding site is contributed by 15 to 20 (SGNAGK). Mg(2+) is bound by residues Glu-45 and Asp-74. Asp-74 serves as the catalytic Proton acceptor. Residues Ser-75, 153–156 (FGYD), Lys-176, and 181–182 (HR) contribute to the substrate site.

Belongs to the HAM1 NTPase family. As to quaternary structure, homodimer. Mg(2+) serves as cofactor.

The enzyme catalyses XTP + H2O = XMP + diphosphate + H(+). It carries out the reaction dITP + H2O = dIMP + diphosphate + H(+). It catalyses the reaction ITP + H2O = IMP + diphosphate + H(+). Functionally, pyrophosphatase that catalyzes the hydrolysis of nucleoside triphosphates to their monophosphate derivatives, with a high preference for the non-canonical purine nucleotides XTP (xanthosine triphosphate), dITP (deoxyinosine triphosphate) and ITP. Seems to function as a house-cleaning enzyme that removes non-canonical purine nucleotides from the nucleotide pool, thus preventing their incorporation into DNA/RNA and avoiding chromosomal lesions. In Prochlorococcus marinus (strain MIT 9313), this protein is dITP/XTP pyrophosphatase.